The following is a 206-amino-acid chain: Small ribosomal subunit protein uS4 (206 aa).

In terms of domain architecture, S4 RNA-binding spans 96-156 (GRLDNVVYRM…EKAKKQSRVK (61 aa)).

The protein belongs to the universal ribosomal protein uS4 family. As to quaternary structure, part of the 30S ribosomal subunit. Contacts protein S5. The interaction surface between S4 and S5 is involved in control of translational fidelity.

One of the primary rRNA binding proteins, it binds directly to 16S rRNA where it nucleates assembly of the body of the 30S subunit. In terms of biological role, with S5 and S12 plays an important role in translational accuracy. The chain is Small ribosomal subunit protein uS4 from Klebsiella pneumoniae (strain 342).